The chain runs to 155 residues: MSTPTQSLQVKLLDPRFGDLWPLPAHATESSAGMDLRAALEAPMTLQPGDAALIPSGIAIHLADPQLCAVILPRSGLGHRHGIVLGNGTGLIDADYQGPLLISTWNRGREAFTIEPGDRIAQLVILPIVRAGLQVVDTFVDSARGAGGFGHTGVR.

Residues 74 to 76 (RSG), Asn-87, and 91 to 93 (LID) each bind substrate.

The protein belongs to the dUTPase family. Mg(2+) is required as a cofactor.

It carries out the reaction dUTP + H2O = dUMP + diphosphate + H(+). It participates in pyrimidine metabolism; dUMP biosynthesis; dUMP from dCTP (dUTP route): step 2/2. Functionally, this enzyme is involved in nucleotide metabolism: it produces dUMP, the immediate precursor of thymidine nucleotides and it decreases the intracellular concentration of dUTP so that uracil cannot be incorporated into DNA. The polypeptide is Deoxyuridine 5'-triphosphate nucleotidohydrolase (Xanthomonas oryzae pv. oryzae (strain PXO99A)).